The primary structure comprises 376 residues: Putative F-box protein At3g18330 (376 aa).

One can recognise an F-box domain in the interval 1–46 (MPMPNLPKELVEEILSFVPATYLKRLSATCKPWNRLIHNDKRFARK).

The chain is Putative F-box protein At3g18330 from Arabidopsis thaliana (Mouse-ear cress).